We begin with the raw amino-acid sequence, 1137 residues long: Calcium-activated potassium channel subunit alpha-1 (1137 aa).

The Extracellular portion of the chain corresponds to 1 to 44; the sequence is MSNNINANNLNTDSSSSPVNVPKMDALIIPVTMEVPCDSRGQRM. A helical membrane pass occupies residues 45 to 65; it reads WWAFLASSMVTFFGGLFIILL. At 66-137 the chain is on the cytoplasmic side; sequence WRTLKYLWTV…MISAQTLTGR (72 aa). The chain crosses the membrane as a helical span at residues 138 to 158; that stretch reads VLVVLVFALSIGALVIYFIDS. Over 159-173 the chain is Extracellular; that stretch reads SNPIESCQNFYKDFT. A helical transmembrane segment spans residues 174–194; sequence LQIDMAFNVFFLLYFGLRFIA. The Cytoplasmic portion of the chain corresponds to 195–198; sequence ANDK. Residues 199-219 traverse the membrane as a helical segment; it reads LWFWLEVNSVVDFFTVPPVFV. Residues 220–223 lie on the Extracellular side of the membrane; the sequence is SVYL. A helical; Voltage-sensor transmembrane segment spans residues 224-244; the sequence is NRSWLGLRFLRALRLIQFSEI. The Cytoplasmic segment spans residues 245 to 259; that stretch reads LQFLNILKTSNSIKL. Residues 260-280 traverse the membrane as a helical segment; it reads VNLCSIFISTWLTAAGFIHLV. At 281-294 the chain is on the extracellular side; the sequence is ENSGDPWENFQNNQ. The segment at residues 295–317 is an intramembrane region (pore-forming); the sequence is QLTYWECVYLLMVTMSTVGYGDV. The Selectivity for potassium motif lies at 311-314; sequence TVGY. Residues 318 to 326 lie on the Extracellular side of the membrane; it reads YAKTTLGRL. A helical transmembrane segment spans residues 327–347; the sequence is FMVFFILGGLAMFASYVPEII. The Cytoplasmic segment spans residues 348–1137; the sequence is ELIGNRKKYG…KQKYVQEDRL (790 aa). An RCK N-terminal 1 domain is found at 366 to 508; the sequence is RKHIVVCGHI…WNWKEGDDAI (143 aa). Mg(2+) is bound by residues E398, Q421, and E423. The tract at residues 515 to 535 is segment S7; that stretch reads LGFIAQSCLAPGLSTMLANLF. The segment S8 stretch occupies residues 572–592; that stretch reads LSFPAVCELVFAKLKLLMIAI. The interval 636–640 is heme-binding motif; the sequence is CKACH. Residues 660–688 are disordered; the sequence is EQPSTLSPKKKQRNGGMRNSPNSSPKLMR. Residues 738–758 are segment S9; sequence VLSGHVVVCIFGDVKSALIGL. The RCK N-terminal 2 domain occupies 740–884; the sequence is SGHVVVCIFG…MDRSSPDNSP (145 aa). The Calcium bowl signature appears at 904–926; it reads TELVNDSNVQFLDQDDDDDPDTE. Ca(2+) contacts are provided by Q913, D916, D919, and D921. A segment S10 region spans residues 933–953; that stretch reads FACGTAFAVSVLDSLMSATYF. A compositionally biased stretch (low complexity) spans 1088–1112; it reads ASLSHSSHSSYSSSKKSSSVHSIPS. Residues 1088–1137 are disordered; sequence ASLSHSSHSSYSSSKKSSSVHSIPSTANRPNRTKTRDSREKQKYVQEDRL. The span at 1121 to 1137 shows a compositional bias: basic and acidic residues; sequence KTRDSREKQKYVQEDRL.

The protein belongs to the potassium channel family. Calcium-activated (TC 1.A.1.3) subfamily. KCa1.1/KCNMA1 sub-subfamily. Homotetramer; which constitutes the calcium-activated potassium channel.

It is found in the cell membrane. The catalysed reaction is K(+)(in) = K(+)(out). Its activity is regulated as follows. Ethanol and carbon monoxide-bound heme increase channel activation. Heme inhibits channel activation. Its function is as follows. Potassium channel activated by both membrane depolarization or increase in cytosolic Ca(2+) that mediates export of K(+). It is also activated by the concentration of cytosolic Mg(2+). Its activation dampens the excitatory events that elevate the cytosolic Ca(2+) concentration and/or depolarize the cell membrane. It therefore contributes to repolarization of the membrane potential. Plays a key role in controlling excitability in a number of systems, such as regulation of the contraction of smooth muscle, the tuning of hair cells in the cochlea, regulation of transmitter release, and innate immunity. In smooth muscles, its activation by high level of Ca(2+), caused by ryanodine receptors in the sarcoplasmic reticulum, regulates the membrane potential. In cochlea cells, its number and kinetic properties partly determine the characteristic frequency of each hair cell and thereby helps to establish a tonotopic map. Highly sensitive to both iberiotoxin (IbTx) and charybdotoxin (CTX). This Gallus gallus (Chicken) protein is Calcium-activated potassium channel subunit alpha-1 (KCNMA1).